Consider the following 283-residue polypeptide: Putative cytochrome b-c1 complex subunit Rieske-like protein 1 (283 aa).

The helical transmembrane segment at Thr116–Met149 threads the bilayer. Residues Glu196 to Ile281 form the Rieske domain. Cys226, His228, Cys245, and His248 together coordinate [2Fe-2S] cluster. Cys231 and Cys247 form a disulfide bridge.

The protein belongs to the Rieske iron-sulfur protein family. [2Fe-2S] cluster serves as cofactor.

The protein localises to the membrane. This is Putative cytochrome b-c1 complex subunit Rieske-like protein 1 (UQCRFS1P1) from Homo sapiens (Human).